The following is a 486-amino-acid chain: Malonate-semialdehyde dehydrogenase 2 (486 aa).

5 residues coordinate NAD(+): phenylalanine 154, lysine 178, glutamate 181, arginine 182, and serine 231. Cysteine 286 (nucleophile) is an active-site residue. Residue glutamate 385 participates in NAD(+) binding.

Belongs to the aldehyde dehydrogenase family. IolA subfamily. As to quaternary structure, homotetramer.

It carries out the reaction 3-oxopropanoate + NAD(+) + CoA + H2O = hydrogencarbonate + acetyl-CoA + NADH + H(+). It catalyses the reaction 2-methyl-3-oxopropanoate + NAD(+) + CoA + H2O = propanoyl-CoA + hydrogencarbonate + NADH + H(+). Its pathway is polyol metabolism; myo-inositol degradation into acetyl-CoA; acetyl-CoA from myo-inositol: step 7/7. Its function is as follows. Catalyzes the oxidation of malonate semialdehyde (MSA) and methylmalonate semialdehyde (MMSA) into acetyl-CoA and propanoyl-CoA, respectively. Is involved in a myo-inositol catabolic pathway. Bicarbonate, and not CO2, is the end-product of the enzymatic reaction. This is Malonate-semialdehyde dehydrogenase 2 from Shouchella clausii (strain KSM-K16) (Alkalihalobacillus clausii).